The sequence spans 555 residues: Dynein regulatory complex protein 11 (555 aa).

IQ domains lie at 154–183 (EDEA…TKRQ) and 199–226 (HEEA…ADKE). Disordered stretches follow at residues 232–255 (MKPK…MRRK), 299–377 (KRNP…EQKI), 450–469 (AAKL…EPFS), and 501–555 (AKKD…SCGA). 2 stretches are compositionally biased toward basic and acidic residues: residues 235–244 (KPRDPKRDPQ) and 338–367 (GDGK…KGGG). A compositionally biased stretch (basic residues) spans 452 to 464 (KLGKKGKKKKGKK). Residues 501–521 (AKKDEKDAAGDGKGKGKDGKG) show a composition bias toward basic and acidic residues. Residues 537-546 (KKKKGGKKKS) are compositionally biased toward basic residues.

This sequence belongs to the AAA ATPase family. DRC11 subfamily. As to quaternary structure, component of the nexin-dynein regulatory complex (N-DRC). Interacts with DRC5.

Its subcellular location is the cytoplasm. It is found in the cytoskeleton. The protein resides in the flagellum axoneme. In terms of biological role, component of the nexin-dynein regulatory complex (N-DRC), a key regulator of ciliary/flagellar motility which maintains the alignment and integrity of the distal axoneme and regulates microtubule sliding in motile axonemes. This is Dynein regulatory complex protein 11 from Chlamydomonas reinhardtii (Chlamydomonas smithii).